The chain runs to 158 residues: NADH-quinone oxidoreductase subunit B (158 aa).

Residues C37, C38, C102, and C132 each contribute to the [4Fe-4S] cluster site.

Belongs to the complex I 20 kDa subunit family. In terms of assembly, NDH-1 is composed of 14 different subunits. Subunits NuoB, C, D, E, F, and G constitute the peripheral sector of the complex. It depends on [4Fe-4S] cluster as a cofactor.

The protein localises to the cell inner membrane. It catalyses the reaction a quinone + NADH + 5 H(+)(in) = a quinol + NAD(+) + 4 H(+)(out). Functionally, NDH-1 shuttles electrons from NADH, via FMN and iron-sulfur (Fe-S) centers, to quinones in the respiratory chain. Couples the redox reaction to proton translocation (for every two electrons transferred, four hydrogen ions are translocated across the cytoplasmic membrane), and thus conserves the redox energy in a proton gradient. This is NADH-quinone oxidoreductase subunit B from Bordetella avium (strain 197N).